Consider the following 352-residue polypeptide: Nuclear receptor subfamily 1 group I member 3 (352 aa).

Positions 8-83 (LRNCVVCGDQ…AGMRKDMILS (76 aa)) form a DNA-binding region, nuclear receptor. The segment at 11–31 (CVVCGDQATGYHFNALTCEGC) adopts an NR C4-type zinc-finger fold. At threonine 38 the chain carries Phosphothreonine; by PKC. An NR C4-type zinc finger spans residues 47-71 (CPFAGSCEVSKIQRRHCPACRLQKC). The NR LBD domain maps to 109–352 (EQEELIQTLL…MMPLLQEICS (244 aa)).

The protein belongs to the nuclear hormone receptor family. NR1 subfamily. As to quaternary structure, heterodimer of NR1I3 and RXR. Interacts with PSMC4. Interacts with ECT2. Directly interacts with DNAJC7; this complex may also include HSP90. Interacts with CRY1. Interacts with CRY2 in a ligand-dependent manner. In terms of processing, phosphorylated at Thr-38 by PKC, dephosphorylation of Thr-38 is required for nuclear translocation and activation.

Its subcellular location is the nucleus. The protein resides in the cytoplasm. It localises to the cytoskeleton. Binds and transactivates the retinoic acid response elements that control expression of the retinoic acid receptor beta 2 and alcohol dehydrogenase 3 genes. Transactivates both the phenobarbital responsive element module of the human CYP2B6 gene and the CYP3A4 xenobiotic response element. The protein is Nuclear receptor subfamily 1 group I member 3 (NR1I3) of Macaca mulatta (Rhesus macaque).